The primary structure comprises 1530 residues: Regulating synaptic membrane exocytosis protein 2 (1530 aa).

A disordered region spans residues methionine 1 to glutamate 34. Pro residues predominate over residues arginine 10–glutamate 25. The 169-residue stretch at methionine 26–serine 194 folds into the RabBD domain. The FYVE-type zinc finger occupies lysine 126–glutamate 182. The Zn(2+) site is built by cysteine 132, cysteine 135, cysteine 148, cysteine 151, cysteine 156, cysteine 159, cysteine 174, and cysteine 177. Disordered stretches follow at residues glycine 195 to lysine 608 and serine 632 to threonine 655. Basic and acidic residues-rich tracts occupy residues leucine 210–glutamate 225, glutamate 327–arginine 338, arginine 357–serine 375, glutamate 391–aspartate 410, and glutamate 419–alanine 443. Serine 409 carries the post-translational modification Phosphoserine. The segment covering alanine 458 to serine 472 has biased composition (polar residues). A compositionally biased stretch (basic and acidic residues) spans aspartate 484–aspartate 501. A compositionally biased stretch (polar residues) spans arginine 519–serine 530. Positions arginine 537 to lysine 546 are enriched in basic residues. Acidic residues predominate over residues serine 567 to serine 577. Composition is skewed to basic and acidic residues over residues valine 578–serine 592 and asparagine 643–proline 653. Residues aspartate 677–arginine 763 form the PDZ domain. At threonine 698 the chain carries Phosphothreonine. The segment at isoleucine 771–methionine 802 is disordered. 2 positions are modified to phosphoserine: serine 800 and serine 803. Positions leucine 814 to tyrosine 937 constitute a C2 1 domain. Disordered regions lie at residues proline 948–serine 982, leucine 1003–alanine 1122, arginine 1130–glutamine 1149, lysine 1154–serine 1187, serine 1242–lysine 1263, and lysine 1282–threonine 1307. Over residues leucine 1003–glycine 1024 the composition is skewed to polar residues. Residues arginine 1067–histidine 1086 show a composition bias toward basic and acidic residues. A compositionally biased stretch (polar residues) spans arginine 1088–glycine 1101. Residue serine 1095 is modified to Phosphoserine. A compositionally biased stretch (basic and acidic residues) spans lysine 1154 to alanine 1165. Position 1175 is a phosphoserine (serine 1175). A compositionally biased stretch (low complexity) spans serine 1178 to serine 1187. At serine 1251 the chain carries Phosphoserine. In terms of domain architecture, C2 2 spans alanine 1376–phenylalanine 1494. Residues serine 1515 and serine 1518 each carry the phosphoserine modification.

In terms of assembly, interacts with TSPOAP1 and RIMBP2. Interacts with PPFIA3 and PPFIA4. Interacts via its zinc finger with the first C2 domain of UNC13A. Forms a complex consisting of UNC13A, RIMS2 and RAB3A. Heterodimer with PCLO. Part of a ternary complex involving PCLO and EPAC2. Interacts with RAB3A and RAB3B that have been activated by GTP-binding. Interacts with RAB3C, RAB3D and RAB26. As to expression, detected in testis, pituitary and an insulinoma cell line. Detected at low levels in cerebellar cortex.

The protein localises to the synapse. It is found in the synaptosome. Its function is as follows. Rab effector involved in exocytosis. May act as scaffold protein. Plays a role in dendrite formation by melanocytes. This chain is Regulating synaptic membrane exocytosis protein 2 (Rims2), found in Mus musculus (Mouse).